The sequence spans 74 residues: Probable protein E5B (74 aa).

This is Probable protein E5B from Homo sapiens (Human).